The following is a 340-amino-acid chain: MQAIPIKTIGDPSLCDLVDRFQRQYTYLRLSITEVCNFRCNYCLPDGYRPPSHKQRFLNLVEIKRLARTFANLGTEKIRITGGEPTLRKDFLEIVETISQTEGIHKIALTTNGYRMERDIHLWQQVGITDLNISVDSLDPRQFQLITGENKLQSILKGIDRAFELGYKKIKVNAVLMKQYTAAELDKFLAWIKHKPIQMRFIELMETGEMDNFFKTQHLSGQTVMQRLLAEGWRLQPKAVNDGPAKVLAHPDYQGEIGLIMPYEKNFCASCNRLRVSATGKLHLCLFGEEGLDLRDLLLSDEQQPQLAARLKSALQTKREHHYLHIGNSGIRNNLASIGG.

One can recognise a Radical SAM core domain in the interval 20 to 246 (RFQRQYTYLR…PKAVNDGPAK (227 aa)). Residue R29 coordinates GTP. [4Fe-4S] cluster-binding residues include C36 and C40. Y42 is an S-adenosyl-L-methionine binding site. Residue C43 participates in [4Fe-4S] cluster binding. R79 serves as a coordination point for GTP. S-adenosyl-L-methionine is bound at residue G83. T110 serves as a coordination point for GTP. S134 contacts S-adenosyl-L-methionine. K171 is a GTP binding site. S-adenosyl-L-methionine is bound at residue M205. Positions 268 and 271 each coordinate [4Fe-4S] cluster. Residue 273 to 275 (RLR) coordinates GTP. [4Fe-4S] cluster is bound at residue C285.

Belongs to the radical SAM superfamily. MoaA family. As to quaternary structure, monomer and homodimer. The cofactor is [4Fe-4S] cluster.

The catalysed reaction is GTP + AH2 + S-adenosyl-L-methionine = (8S)-3',8-cyclo-7,8-dihydroguanosine 5'-triphosphate + 5'-deoxyadenosine + L-methionine + A + H(+). The protein operates within cofactor biosynthesis; molybdopterin biosynthesis. Functionally, catalyzes the cyclization of GTP to (8S)-3',8-cyclo-7,8-dihydroguanosine 5'-triphosphate. The protein is GTP 3',8-cyclase of Haemophilus ducreyi (strain 35000HP / ATCC 700724).